The primary structure comprises 118 residues: Late cornified envelope protein 5A (118 aa).

Low complexity predominate over residues 1–10; sequence MSCQQSQQQC. 2 disordered regions span residues 1-32 and 72-118; these read MSCQQSQQQCQPPPKCTPKCPPKCTPKCPPKC and HRPR…GGCC. The segment covering 11 to 32 has biased composition (pro residues); it reads QPPPKCTPKCPPKCTPKCPPKC. Over residues 72-82 the composition is skewed to basic residues; sequence HRPRQSLRRRP. Residues 97-118 are compositionally biased toward low complexity; it reads GGSSCCHSSGGSGCCHSSGGCC.

This sequence belongs to the LCE family. In terms of assembly, interacts with CYSRT1; the interaction is direct. Skin-specific. Expression was readily detected in adult trunk skin, adult arm skin, fetal skin, penal skin, vulva, esophagus and tongue. Not expressed in the cervix, rectum, lung, colon, or placenta. Expression is observed in the heart.

Its function is as follows. Precursors of the cornified envelope of the stratum corneum. In Homo sapiens (Human), this protein is Late cornified envelope protein 5A (LCE5A).